The sequence spans 504 residues: DnaJ homolog subfamily C member 3 (504 aa).

An N-terminal signal peptide occupies residues 1 to 31; it reads MVAPGSVTSRLGSVFPFLLVLVDLQYEGAEC. TPR repeat units lie at residues 37–70, 72–104, 105–138, 154–187, 189–221, 222–255, 268–301, 306–339, and 340–373; these read VEKH…DPDN, IAYY…KMDF, TAAR…NPSE, MQRL…CVWD, ELRE…KNDN, TEAF…DQDH, LNKL…EPGV, IRSK…EPDN, and VNAL…NEND. Cys-248 and Cys-258 form a disulfide bridge. Ser-274 carries the post-translational modification Phosphoserine. Cysteines 313 and 329 form a disulfide. The segment at 375-393 is flexible linker; sequence QIREGLEKAQRLLKQSQRR. The region spanning 394-462 is the J domain; sequence DYYKILGVKR…EMRKKFDDGE (69 aa). Residues 451–481 are disordered; the sequence is DPEMRKKFDDGEDPLDAESQQGGGGNPFHRS.

As to quaternary structure, interacts with EIF2AK4/GCN2; this interaction occurs under endoplasmic reticulum (ER) stress, hypothermic and amino acid starving stress conditions and inhibits EIF2AK4/GCN2 kinase activity. Interacts with EIF2AK3. Interacts with EIF2AK2. Forms a trimeric complex with DNAJB1 and HSPA8. Interacts with THAP12.

It localises to the endoplasmic reticulum. Involved in the unfolded protein response (UPR) during endoplasmic reticulum (ER) stress. Acts as a negative regulator of the EIF2AK4/GCN2 kinase activity by preventing the phosphorylation of eIF-2-alpha at 'Ser-52' and hence attenuating general protein synthesis under ER stress, hypothermic and amino acid starving stress conditions. Co-chaperone of HSPA8/HSC70, it stimulates its ATPase activity. May inhibit both the autophosphorylation of EIF2AK2/PKR and the ability of EIF2AK2 to catalyze phosphorylation of the EIF2A. May inhibit EIF2AK3/PERK activity. This is DnaJ homolog subfamily C member 3 (DNAJC3) from Bos taurus (Bovine).